Consider the following 1273-residue polypeptide: DNA polymerase 037L (1273 aa).

Residues Ile-679 to Glu-837 adopt a coiled-coil conformation.

It belongs to the DNA polymerase type-B family.

The catalysed reaction is DNA(n) + a 2'-deoxyribonucleoside 5'-triphosphate = DNA(n+1) + diphosphate. Functionally, DNA-directed DNA polymerase involved in viral DNA replication. The chain is DNA polymerase 037L (DPOL) from Invertebrate iridescent virus 6 (IIV-6).